Here is a 199-residue protein sequence, read N- to C-terminus: DnaJ homolog subfamily C member 5B (199 aa).

Phosphoserine occurs at positions 14 and 16. Positions Ser19 to Gly84 constitute a J domain.

Interacts with the chaperone complex consisting of HSC70 and SGTA. Palmitoylated.

Its subcellular location is the membrane. The protein is DnaJ homolog subfamily C member 5B (Dnajc5b) of Mus musculus (Mouse).